Consider the following 271-residue polypeptide: Sulfur carrier protein FdhD (271 aa).

The active-site Cysteine persulfide intermediate is the cysteine 114.

This sequence belongs to the FdhD family.

The protein localises to the cytoplasm. In terms of biological role, required for formate dehydrogenase (FDH) activity. Acts as a sulfur carrier protein that transfers sulfur from IscS to the molybdenum cofactor prior to its insertion into FDH. The protein is Sulfur carrier protein FdhD of Agrobacterium fabrum (strain C58 / ATCC 33970) (Agrobacterium tumefaciens (strain C58)).